A 545-amino-acid chain; its full sequence is Calcium-binding mitochondrial carrier SAL1 (545 aa).

The EF-hand 1 domain maps to 11-46 (QRDIRYACLFKELDVKGNGQVTLDNLISAFEKNDHP). Ca(2+) contacts are provided by Lys65, Asp70, Asp93, Asp95, Asp97, Lys99, and Glu104. 3 EF-hand domains span residues 80-115 (NAES…LDNQ), 120-155 (NELN…RGQA), and 156-191 (SHKK…VPRK). 2 residues coordinate Ca(2+): Thr161 and Ser166. Solcar repeat units follow at residues 225 to 332 (IRGF…TKKI), 345 to 434 (LSKF…LKKW), and 452 to 541 (LSNL…LKKF). A run of 6 helical transmembrane segments spans residues 231 to 248 (FIAG…TAPF), 307 to 326 (GNGL…FGSF), 355 to 368 (GLAG…VYPI), 409 to 428 (GVTV…LGTF), 458 to 475 (LPMG…VYPI), and 516 to 535 (GLVP…YLCY).

Belongs to the mitochondrial carrier (TC 2.A.29) family.

Its subcellular location is the mitochondrion inner membrane. In terms of biological role, calcium-dependent mitochondrial solute carrier. The polypeptide is Calcium-binding mitochondrial carrier SAL1 (SAL1) (Saccharomyces cerevisiae (Baker's yeast)).